Consider the following 283-residue polypeptide: Polyamine aminopropyltransferase (283 aa).

Positions 2–237 (ELWYTEEHTD…GHWLFGFASK (236 aa)) constitute a PABS domain. Gln-31 lines the S-methyl-5'-thioadenosine pocket. Spermidine is bound by residues His-62 and Asp-86. Residues Glu-106 and 137-138 (DG) contribute to the S-methyl-5'-thioadenosine site. Asp-155 serves as the catalytic Proton acceptor. Residue 155-158 (DSTD) participates in spermidine binding. An S-methyl-5'-thioadenosine-binding site is contributed by Pro-162.

Belongs to the spermidine/spermine synthase family. As to quaternary structure, homodimer or homotetramer.

The protein localises to the cytoplasm. The catalysed reaction is S-adenosyl 3-(methylsulfanyl)propylamine + putrescine = S-methyl-5'-thioadenosine + spermidine + H(+). It participates in amine and polyamine biosynthesis; spermidine biosynthesis; spermidine from putrescine: step 1/1. Catalyzes the irreversible transfer of a propylamine group from the amino donor S-adenosylmethioninamine (decarboxy-AdoMet) to putrescine (1,4-diaminobutane) to yield spermidine. The sequence is that of Polyamine aminopropyltransferase from Clostridium perfringens (strain ATCC 13124 / DSM 756 / JCM 1290 / NCIMB 6125 / NCTC 8237 / Type A).